The sequence spans 495 residues: Lysine--tRNA ligase (495 aa).

Residues Glu-406 and Glu-413 each contribute to the Mg(2+) site.

Belongs to the class-II aminoacyl-tRNA synthetase family. In terms of assembly, homodimer. It depends on Mg(2+) as a cofactor.

The protein resides in the cytoplasm. The catalysed reaction is tRNA(Lys) + L-lysine + ATP = L-lysyl-tRNA(Lys) + AMP + diphosphate. The chain is Lysine--tRNA ligase from Leuconostoc mesenteroides subsp. mesenteroides (strain ATCC 8293 / DSM 20343 / BCRC 11652 / CCM 1803 / JCM 6124 / NCDO 523 / NBRC 100496 / NCIMB 8023 / NCTC 12954 / NRRL B-1118 / 37Y).